A 1179-amino-acid polypeptide reads, in one-letter code: DNA-directed RNA polymerase subunit beta' (1179 aa).

Cys60, Cys62, Cys75, and Cys78 together coordinate Zn(2+). Positions 450, 452, and 454 each coordinate Mg(2+). The Zn(2+) site is built by Cys791, Cys865, Cys872, and Cys875.

Belongs to the RNA polymerase beta' chain family. In terms of assembly, the RNAP catalytic core consists of 2 alpha, 1 beta, 1 beta' and 1 omega subunit. When a sigma factor is associated with the core the holoenzyme is formed, which can initiate transcription. Requires Mg(2+) as cofactor. It depends on Zn(2+) as a cofactor.

The catalysed reaction is RNA(n) + a ribonucleoside 5'-triphosphate = RNA(n+1) + diphosphate. Functionally, DNA-dependent RNA polymerase catalyzes the transcription of DNA into RNA using the four ribonucleoside triphosphates as substrates. The polypeptide is DNA-directed RNA polymerase subunit beta' (Alkaliphilus oremlandii (strain OhILAs) (Clostridium oremlandii (strain OhILAs))).